The sequence spans 229 residues: Flagellar L-ring protein (229 aa).

A signal peptide spans 1 to 25 (MKQVRLPSSATVRAACAVAVAALAG). Cysteine 26 is lipidated: N-palmitoyl cysteine. Cysteine 26 carries S-diacylglycerol cysteine lipidation.

It belongs to the FlgH family. In terms of assembly, the basal body constitutes a major portion of the flagellar organelle and consists of four rings (L,P,S, and M) mounted on a central rod.

It is found in the cell outer membrane. It localises to the bacterial flagellum basal body. Its function is as follows. Assembles around the rod to form the L-ring and probably protects the motor/basal body from shearing forces during rotation. In Burkholderia cenocepacia (strain ATCC BAA-245 / DSM 16553 / LMG 16656 / NCTC 13227 / J2315 / CF5610) (Burkholderia cepacia (strain J2315)), this protein is Flagellar L-ring protein.